The following is a 238-amino-acid chain: Calmodulin-binding protein 25 (238 aa).

Positions 68–78 (STNTLSSTVSG) are enriched in polar residues. The tract at residues 68–87 (STNTLSSTVSGASDPEIIGG) is disordered. Residues 92 to 108 (KRNCLLTDGKAAKRRAR) carry the Bipartite nuclear localization signal motif. The short motif at 125-134 (FRQMVQQVTG) is the VQ element. Positions 201 to 220 (SSVGLPSGKPSATADPGGSA) are disordered.

In terms of assembly, interacts with calmodulin (CaM). Interacts with WRKY25 and WRKY51. As to expression, expressed in leaves, flowers and siliques.

Its subcellular location is the nucleus. Functionally, calmodulin-binding protein that functions as a negative regulator of osmotic stress tolerance. This Arabidopsis thaliana (Mouse-ear cress) protein is Calmodulin-binding protein 25.